Here is a 210-residue protein sequence, read N- to C-terminus: 3-oxo-tetronate 4-phosphate decarboxylase (210 aa).

Glutamate 74 (proton acceptor) is an active-site residue. Glutamate 74, histidine 93, and histidine 95 together coordinate Zn(2+). Residue tyrosine 120 is the Proton donor of the active site. Histidine 160 lines the Zn(2+) pocket.

This sequence belongs to the aldolase class II family. AraD/FucA subfamily. Zn(2+) is required as a cofactor.

It carries out the reaction 3-dehydro-4-O-phospho-D-erythronate + H(+) = dihydroxyacetone phosphate + CO2. It catalyses the reaction 3-dehydro-4-O-phospho-L-erythronate + H(+) = dihydroxyacetone phosphate + CO2. Catalyzes the decarboxylation of 3-oxo-tetronate 4-phosphate to dihydroxyacetone phosphate (DHAP) and CO(2). This Haemophilus influenzae (strain ATCC 51907 / DSM 11121 / KW20 / Rd) protein is 3-oxo-tetronate 4-phosphate decarboxylase.